The following is a 317-amino-acid chain: Probable transcription factor At5g61620 (317 aa).

A CCHC-type zinc finger spans residues 12-25 (CSHCGHNGHNARTC). A disordered region spans residues 77-111 (DPIAAVDDTGYHSDGQIHSKKGKTAHEKKKGKPWT). Over residues 94 to 108 (HSKKGKTAHEKKKGK) the composition is skewed to basic residues. The HTH myb-type domain occupies 102–158 (HEKKKGKPWTEEEHRNFLIGLNKLGKGDWRGIAKSFVSTRTPTQVASHAQKYFIRLN). The H-T-H motif DNA-binding region spans 130–154 (WRGIAKSFVSTRTPTQVASHAQKYF). The interval 173–206 (SLEDQKEKERNSQDASTKTPPKQPITGIQQPVVQ) is disordered. Positions 175–184 (EDQKEKERNS) are enriched in basic and acidic residues. Residues 185-206 (QDASTKTPPKQPITGIQQPVVQ) are compositionally biased toward polar residues.

Its subcellular location is the nucleus. Its function is as follows. Probable transcription factor involved in somatic embryogenesis. Acts as a positive regulator of BHLH109. The chain is Probable transcription factor At5g61620 from Arabidopsis thaliana (Mouse-ear cress).